The following is a 121-amino-acid chain: Small ribosomal subunit protein uS13 (121 aa).

The disordered stretch occupies residues 90–121; sequence RHRRGLPVRGQHTKNNARTRKGKKVSIAGRKK.

Belongs to the universal ribosomal protein uS13 family. In terms of assembly, part of the 30S ribosomal subunit. Forms a loose heterodimer with protein S19. Forms two bridges to the 50S subunit in the 70S ribosome.

In terms of biological role, located at the top of the head of the 30S subunit, it contacts several helices of the 16S rRNA. In the 70S ribosome it contacts the 23S rRNA (bridge B1a) and protein L5 of the 50S subunit (bridge B1b), connecting the 2 subunits; these bridges are implicated in subunit movement. Contacts the tRNAs in the A and P-sites. This chain is Small ribosomal subunit protein uS13, found in Lactiplantibacillus plantarum (strain ATCC BAA-793 / NCIMB 8826 / WCFS1) (Lactobacillus plantarum).